Reading from the N-terminus, the 227-residue chain is Cytochrome c oxidase subunit 2 (227 aa).

Residues 1–14 are Mitochondrial intermembrane-facing; that stretch reads MAYPFQLGLQDATS. The chain crosses the membrane as a helical span at residues 15 to 45; it reads PIMEELLHFHDHTLMIVFLISSLVLYIISLM. Over 46 to 59 the chain is Mitochondrial matrix; sequence LTTKLTHTSTMDAQ. Residues 60–87 form a helical membrane-spanning segment; the sequence is EVETVWTILPAIILILIALPSLRILYMM. The Mitochondrial intermembrane portion of the chain corresponds to 88 to 227; that stretch reads DEINNPSLTV…YFETWSAVMV (140 aa). Cu cation contacts are provided by His-161, Cys-196, Glu-198, Cys-200, His-204, and Met-207. Position 198 (Glu-198) interacts with Mg(2+). Tyr-218 carries the phosphotyrosine modification.

It belongs to the cytochrome c oxidase subunit 2 family. As to quaternary structure, component of the cytochrome c oxidase (complex IV, CIV), a multisubunit enzyme composed of 14 subunits. The complex is composed of a catalytic core of 3 subunits MT-CO1, MT-CO2 and MT-CO3, encoded in the mitochondrial DNA, and 11 supernumerary subunits COX4I, COX5A, COX5B, COX6A, COX6B, COX6C, COX7A, COX7B, COX7C, COX8 and NDUFA4, which are encoded in the nuclear genome. The complex exists as a monomer or a dimer and forms supercomplexes (SCs) in the inner mitochondrial membrane with NADH-ubiquinone oxidoreductase (complex I, CI) and ubiquinol-cytochrome c oxidoreductase (cytochrome b-c1 complex, complex III, CIII), resulting in different assemblies (supercomplex SCI(1)III(2)IV(1) and megacomplex MCI(2)III(2)IV(2)). Found in a complex with TMEM177, COA6, COX18, COX20, SCO1 and SCO2. Interacts with TMEM177 in a COX20-dependent manner. Interacts with COX20. Interacts with COX16. The cofactor is Cu cation.

The protein localises to the mitochondrion inner membrane. The enzyme catalyses 4 Fe(II)-[cytochrome c] + O2 + 8 H(+)(in) = 4 Fe(III)-[cytochrome c] + 2 H2O + 4 H(+)(out). Functionally, component of the cytochrome c oxidase, the last enzyme in the mitochondrial electron transport chain which drives oxidative phosphorylation. The respiratory chain contains 3 multisubunit complexes succinate dehydrogenase (complex II, CII), ubiquinol-cytochrome c oxidoreductase (cytochrome b-c1 complex, complex III, CIII) and cytochrome c oxidase (complex IV, CIV), that cooperate to transfer electrons derived from NADH and succinate to molecular oxygen, creating an electrochemical gradient over the inner membrane that drives transmembrane transport and the ATP synthase. Cytochrome c oxidase is the component of the respiratory chain that catalyzes the reduction of oxygen to water. Electrons originating from reduced cytochrome c in the intermembrane space (IMS) are transferred via the dinuclear copper A center (CU(A)) of subunit 2 and heme A of subunit 1 to the active site in subunit 1, a binuclear center (BNC) formed by heme A3 and copper B (CU(B)). The BNC reduces molecular oxygen to 2 water molecules using 4 electrons from cytochrome c in the IMS and 4 protons from the mitochondrial matrix. This is Cytochrome c oxidase subunit 2 (MT-CO2) from Lycalopex vetulus (Hoary fox).